Reading from the N-terminus, the 426-residue chain is Large envelope protein (426 aa).

Residue Gly-2 is the site of N-myristoyl glycine; by host attachment. The pre-S1 stretch occupies residues Gly-2–Leu-143. Positions Gly-2–Ser-202 are pre-S. Residues Gly-2 to Ser-209 are Virion surface; in external conformation-facing. Residues Gly-2–Arg-281 are Intravirion; in internal conformation-facing. Asn-3 is a glycosylation site (N-linked (GlcNAc...) asparagine). Residues Ile-107–His-142 form a disordered region. The segment at Thr-144–Ser-202 is pre-S2. Residues Leu-210–Ile-230 traverse the membrane as a helical segment. The Intravirion; in external conformation portion of the chain corresponds to Ala-231 to Arg-281. Residues Phe-282 to Trp-302 form a helical membrane-spanning segment. Residues Lys-303 to Asn-374 are Virion surface-facing. A glycan (N-linked (GlcNAc...) asparagine; by host) is linked at Asn-346. A helical membrane pass occupies residues Leu-375 to Ile-395. The Intravirion portion of the chain corresponds to Trp-396–Trp-401. A helical transmembrane segment spans residues Gly-402–Val-424. At Tyr-425–Ile-426 the chain is on the virion surface side.

This sequence belongs to the orthohepadnavirus major surface antigen family. In terms of assembly, in its internal form (Li-HBsAg), interacts with the capsid protein and with the isoform S. Interacts with host chaperone CANX. Associates with host chaperone CANX through its pre-S2 N glycan; this association may be essential for isoform M proper secretion. As to quaternary structure, interacts with isoform L. Interacts with the antigens of satellite virus HDV (HDVAgs); this interaction is required for encapsidation of HDV genomic RNA. In terms of processing, isoform M is N-terminally acetylated by host at a ratio of 90%, and N-glycosylated by host at the pre-S2 region. Post-translationally, myristoylated.

It localises to the virion membrane. Its function is as follows. The large envelope protein exists in two topological conformations, one which is termed 'external' or Le-HBsAg and the other 'internal' or Li-HBsAg. In its external conformation the protein attaches the virus to cell receptors and thereby initiating infection. This interaction determines the species specificity and liver tropism. This attachment induces virion internalization predominantly through caveolin-mediated endocytosis. The large envelope protein also assures fusion between virion membrane and endosomal membrane. In its internal conformation the protein plays a role in virion morphogenesis and mediates the contact with the nucleocapsid like a matrix protein. The middle envelope protein plays an important role in the budding of the virion. It is involved in the induction of budding in a nucleocapsid independent way. In this process the majority of envelope proteins bud to form subviral lipoprotein particles of 22 nm of diameter that do not contain a nucleocapsid. The protein is Large envelope protein of Marmota monax (Woodchuck).